The following is a 464-amino-acid chain: MGKRLLDKLWERHVVTTNENGLDLLYIDLHLVHEVTSPQAFEGLRLTNRTVRRPDLTFATMDHNIPTKDVWNITDRIAKQQLDTLRANCKQFQVPLADIGDEEQGIVHVIGPELGLTQPGKTIVCGDSHTATHGAFGALAFGIGTSEVEHVLATQTLWQRKPKAMGIELKGKLQKGVYAKDIILHLLSKYGVAVGTGYVMEFYGETIQVMEMEERMTLCNMAIEGGAKAGIIAPDEKTFAYVKGRKYAPRDYETFEKKWFELYTDADAIYDLHISIDVTDLAPYVTWGTNPSMGVRIDEKLPEKHDVNDERAFSYMGLIPGQSTYDIPVQHVFIGSCTNSRLSDLEIAASVVKGRKVKEGVRALVVPGSKRVRDAAMQKGLHHIFEEAGFEWREPGCSMCLGMNPDQVPEGEHCASTSNRNFEGRQGKGARTHLVSPAMAAAAALYGHFVDIRKESYDGAISYS.

[4Fe-4S] cluster is bound by residues Cys-337, Cys-397, and Cys-400.

Belongs to the aconitase/IPM isomerase family. LeuC type 1 subfamily. As to quaternary structure, heterodimer of LeuC and LeuD. It depends on [4Fe-4S] cluster as a cofactor.

It catalyses the reaction (2R,3S)-3-isopropylmalate = (2S)-2-isopropylmalate. Its pathway is amino-acid biosynthesis; L-leucine biosynthesis; L-leucine from 3-methyl-2-oxobutanoate: step 2/4. Catalyzes the isomerization between 2-isopropylmalate and 3-isopropylmalate, via the formation of 2-isopropylmaleate. The chain is 3-isopropylmalate dehydratase large subunit from Bacillus cereus (strain 03BB102).